Reading from the N-terminus, the 397-residue chain is FAD-dependent monooxygenase trt8 (397 aa).

Tyr53 is an active-site residue. Positions 145 and 158 each coordinate FAD.

This sequence belongs to the paxM FAD-dependent monooxygenase family. The cofactor is FAD.

It participates in secondary metabolite biosynthesis; terpenoid biosynthesis. In terms of biological role, FAD-dependent monooxygenase; part of the gene cluster that mediates the biosynthesis of terretonin, a fungal meroterpenoid that acts as a mycotoxin. The first step of the pathway is the synthesis of 3,5-dimethylorsellinic acid (DMOA) by the polyketide synthase trt4. DMOA is then prenylated into farnesyl-DMOA by the polyprenyl transferase trt2. Methylation by the methyltransferase trt5 then leads to farnesyl-DMOA methyl ester which is further subject to epoxidation by the FAD-dependent monooxygenase trt8 to yield epoxyfarnesyl-DMOA methyl ester. Cyclization of epoxyfarnesyl-DMOA methyl ester by the terpene cyclase trt1 leads to a tetracycle intermediate which is in turn converted to preterretonin. Dehydrogenase trt9 comes next to transform preterretonin to preterrenoid. The FAD-dependent monooxygenase trt3 is then required for the C-hydroxylation at C16 of preterrenoid to yield terrenoid. The cytochrome P450 trt6 catalyzes three successive oxidations to transform terrenoid into an unstable intermediate, which then undergoes the D-ring expansion and unusual rearrangement of the methoxy group to afford the core skeleton of terretonin. Trt14 catalyzes the D-ring expansion of terretonin involving intramolecular methoxy rearrangement as well as the hydrolysis of the expanded D-ring and the methyl ester moiety. Finally, the nonheme iron-dependent dioxygenase trt7 accomplishes the last two oxidation reactions steps to complete the biosynthesis of terretonin. Terretonin C is produced via spontaneous decarboxylation of the terretonin precursor. Another shunt product of the terretonin biosynthesis is dihydrofarnesyl-DMOA, derived from epoxyfarnesyl-DMOA through hydrolysis of the epoxide. The protein is FAD-dependent monooxygenase trt8 of Aspergillus terreus (strain NIH 2624 / FGSC A1156).